Reading from the N-terminus, the 150-residue chain is Holo-[acyl-carrier-protein] synthase (150 aa).

Residues Asp8 and Glu57 each contribute to the Mg(2+) site.

This sequence belongs to the P-Pant transferase superfamily. AcpS family. The cofactor is Mg(2+).

It is found in the cytoplasm. The enzyme catalyses apo-[ACP] + CoA = holo-[ACP] + adenosine 3',5'-bisphosphate + H(+). Its function is as follows. Transfers the 4'-phosphopantetheine moiety from coenzyme A to a Ser of acyl-carrier-protein. The protein is Holo-[acyl-carrier-protein] synthase of Jannaschia sp. (strain CCS1).